The sequence spans 594 residues: Probable methylenetetrahydrofolate reductase (NADH) (594 aa).

Glu21 (proton donor/acceptor) is an active-site residue. NAD(+) is bound by residues 21–26 (EYFPPK) and 52–53 (TW). Residues 52-53 (TW), His81, 111-113 (RGD), Tyr153, 157-160 (HPDA), Asp175, and Lys182 contribute to the FAD site. Asp113 contacts substrate. Positions 193 and 285 each coordinate substrate.

Belongs to the methylenetetrahydrofolate reductase family. In terms of assembly, homodimer. FAD serves as cofactor.

The enzyme catalyses (6S)-5-methyl-5,6,7,8-tetrahydrofolate + NAD(+) = (6R)-5,10-methylene-5,6,7,8-tetrahydrofolate + NADH + H(+). It functions in the pathway one-carbon metabolism; tetrahydrofolate interconversion. With respect to regulation, plant MTHFRs strongly prefer NADH over NADPH. Not inhibited by methionine or S-adenosylmethionine. The probable reversibility of the MTHFR reaction in plants suggests that they can metabolize the methyl group of 5,10-methylenetetrahydrofolate to serine, sugars and starch. This chain is Probable methylenetetrahydrofolate reductase (NADH), found in Oryza sativa subsp. japonica (Rice).